A 425-amino-acid chain; its full sequence is Nuclear pore complex-interacting protein family member B6 (425 aa).

Residues 332 to 414 (SPLPPSVDDN…RRLSKLRTRH (83 aa)) are disordered. A compositionally biased stretch (basic and acidic residues) spans 353 to 395 (EVEKPPKPKRWRVDEVEQSPKPKRRRVDEVEQSPKPKRQREAE). Residues 401–414 (KPKRRRLSKLRTRH) are compositionally biased toward basic residues.

It belongs to the NPIP family.

The sequence is that of Nuclear pore complex-interacting protein family member B6 (NPIPB6) from Homo sapiens (Human).